We begin with the raw amino-acid sequence, 206 residues long: Large ribosomal subunit protein uL4 (206 aa).

The tract at residues 60 to 84 (TAKPFKQKGTGHARQGSKRSPQFRG) is disordered. The span at 64 to 76 (FKQKGTGHARQGS) shows a compositional bias: basic residues.

This sequence belongs to the universal ribosomal protein uL4 family. Part of the 50S ribosomal subunit.

Its function is as follows. One of the primary rRNA binding proteins, this protein initially binds near the 5'-end of the 23S rRNA. It is important during the early stages of 50S assembly. It makes multiple contacts with different domains of the 23S rRNA in the assembled 50S subunit and ribosome. Functionally, forms part of the polypeptide exit tunnel. This chain is Large ribosomal subunit protein uL4, found in Rhodospirillum rubrum (strain ATCC 11170 / ATH 1.1.1 / DSM 467 / LMG 4362 / NCIMB 8255 / S1).